Reading from the N-terminus, the 307-residue chain is Phosphoribosylaminoimidazole-succinocarboxamide synthase (307 aa).

This sequence belongs to the SAICAR synthetase family.

The enzyme catalyses 5-amino-1-(5-phospho-D-ribosyl)imidazole-4-carboxylate + L-aspartate + ATP = (2S)-2-[5-amino-1-(5-phospho-beta-D-ribosyl)imidazole-4-carboxamido]succinate + ADP + phosphate + 2 H(+). It functions in the pathway purine metabolism; IMP biosynthesis via de novo pathway; 5-amino-1-(5-phospho-D-ribosyl)imidazole-4-carboxamide from 5-amino-1-(5-phospho-D-ribosyl)imidazole-4-carboxylate: step 1/2. In Thermobifida fusca (strain YX), this protein is Phosphoribosylaminoimidazole-succinocarboxamide synthase.